The following is a 197-amino-acid chain: uncharacterized protein (197 aa).

A helical membrane pass occupies residues 7–27 (PISVGQMVLICIFILIILFVI).

This sequence belongs to the IIV-6 307L family.

It is found in the membrane. This is an uncharacterized protein from Acheta domesticus (House cricket).